The sequence spans 424 residues: DNA primase DnaG (424 aa).

One can recognise a Toprim domain in the interval 171–245 (DDIIVVEGRA…DVDFVARAPP (75 aa)). Positions 177, 219, and 221 each coordinate Mg(2+).

The protein belongs to the archaeal DnaG primase family. Forms a ternary complex with MCM helicase and DNA. Mg(2+) serves as cofactor.

The catalysed reaction is ssDNA + n NTP = ssDNA/pppN(pN)n-1 hybrid + (n-1) diphosphate.. RNA polymerase that catalyzes the synthesis of short RNA molecules used as primers for DNA polymerase during DNA replication. This Methanocaldococcus jannaschii (strain ATCC 43067 / DSM 2661 / JAL-1 / JCM 10045 / NBRC 100440) (Methanococcus jannaschii) protein is DNA primase DnaG.